The following is a 358-amino-acid chain: Probable butyrate kinase (358 aa).

The protein belongs to the acetokinase family.

The protein localises to the cytoplasm. The enzyme catalyses butanoate + ATP = butanoyl phosphate + ADP. This is Probable butyrate kinase from Oceanobacillus iheyensis (strain DSM 14371 / CIP 107618 / JCM 11309 / KCTC 3954 / HTE831).